A 507-amino-acid polypeptide reads, in one-letter code: Alkyl hydroperoxide reductase subunit F (507 aa).

Asp-207–Ile-222 serves as a coordination point for FAD. Cys-335 and Cys-338 are disulfide-bonded. Residue Asp-347 to Ala-361 coordinates NAD(+). Thr-467 to Asp-477 is a binding site for FAD.

This sequence belongs to the class-II pyridine nucleotide-disulfide oxidoreductase family. As to quaternary structure, homodimer. The cofactor is FAD.

Its function is as follows. Serves to protect the cell against DNA damage by alkyl hydroperoxides. It can use either NADH or NADPH as electron donor for direct reduction of redox dyes or of alkyl hydroperoxides when combined with the AhpC protein. This is Alkyl hydroperoxide reductase subunit F (ahpF) from Staphylococcus epidermidis (strain ATCC 12228 / FDA PCI 1200).